The following is a 478-amino-acid chain: 3-ketoacyl-CoA synthase 3 (478 aa).

The signal sequence occupies residues 1 to 25 (MDLLVMLLSLLVSYLIFKIWKRIDS). In terms of domain architecture, FAE spans 26-313 (KRDQNCYILD…FMLCLLLKKL (288 aa)). Catalysis depends on residues Cys168, His247, His345, His349, His378, and Asn382.

This sequence belongs to the thiolase-like superfamily. Chalcone/stilbene synthases family. As to expression, expressed in siliques, leaves, stems and seedlings.

It localises to the endoplasmic reticulum. It carries out the reaction a very-long-chain acyl-CoA + malonyl-CoA + H(+) = a very-long-chain 3-oxoacyl-CoA + CO2 + CoA. It participates in lipid metabolism; fatty acid biosynthesis. The protein is 3-ketoacyl-CoA synthase 3 of Arabidopsis thaliana (Mouse-ear cress).